The sequence spans 498 residues: ADP,ATP carrier protein 1 (498 aa).

Over 1 to 33 (MSTSKSENYLSELRKIIWPIEQYENKKFLPLAF) the chain is Cytoplasmic. The helical transmembrane segment at 34 to 54 (MMFCILLNYSTLRSIKDGFVV) threads the bilayer. A disulfide bridge links C37 with C85. Over 55-67 (TDIGTESISFLKT) the chain is Extracellular. Residues 68 to 88 (YIVLPSAVIAMIIYVKLCDIL) form a helical membrane-spanning segment. Residues 89 to 92 (KQEN) are Cytoplasmic-facing. The helical transmembrane segment at 93 to 113 (VFYVITSFFLGYFALFAFVLY) threads the bilayer. The Extracellular portion of the chain corresponds to 114–147 (PYPDLVHPDHKTIESLSLAYPNFKWFIKIVGKWS). A helical membrane pass occupies residues 148 to 168 (FASFYTIAELWGTMMLSLLFW). Residues 169–184 (QFANQITKIAEAKRFY) lie on the Cytoplasmic side of the membrane. A helical transmembrane segment spans residues 185-205 (SMFGLLANLALPVTSVVIGYF). The Extracellular portion of the chain corresponds to 206 to 218 (LHEKTQIVAEHLK). A helical transmembrane segment spans residues 219–239 (FVPLFVIMITSSFLIILTYRW). Over 240 to 279 (MNKNVLTDPRLYDPALVKEKKTKAKLSFIESLKMIFTSKY) the chain is Cytoplasmic. The chain crosses the membrane as a helical span at residues 280-300 (VGYIALLIIAYGVSVNLVEGV). Residues 301 to 320 (WKSKVKELYPTKEAYTIYMG) are Extracellular-facing. The chain crosses the membrane as a helical span at residues 321 to 341 (QFQFYQGWVAIAFMLIGSNIL). Over 342–348 (RKVSWLT) the chain is Cytoplasmic. Residues 349 to 369 (AAMITPLMMFITGAAFFSFIF) traverse the membrane as a helical segment. Over 370 to 379 (FDSVIAMNLT) the chain is Extracellular. The helical transmembrane segment at 380 to 400 (GILASSPLTLAVMIGMIQNVL) threads the bilayer. The Cytoplasmic portion of the chain corresponds to 401-438 (SKGVKYSLFDATKNMAYIPLDKDLRVKGQAAVEVIGGR). 436–442 (GGRLGKS) lines the ATP pocket. Residues 439 to 459 (LGKSGGAIIQSTFFILFPVFG) traverse the membrane as a helical segment. Topologically, residues 460–465 (FIEATP) are extracellular. The chain crosses the membrane as a helical span at residues 466-486 (YFASIFFIIVILWIFAVKGLN). At 487–498 (KEYQVLVNKNEK) the chain is on the cytoplasmic side.

This sequence belongs to the ADP/ATP translocase tlc family.

The protein resides in the cell membrane. Provides the rickettsial cell with host ATP in exchange for rickettsial ADP. This is an obligate exchange system. This energy acquiring activity is an important component of rickettsial parasitism. In Rickettsia prowazekii (strain Madrid E), this protein is ADP,ATP carrier protein 1 (tlcA).